The sequence spans 149 residues: Nucleoside diphosphate kinase (149 aa).

Residues K9, F57, R85, T91, R102, and N112 each coordinate ATP. Residue H115 is the Pros-phosphohistidine intermediate of the active site.

This sequence belongs to the NDK family. Homotetramer. Requires Mg(2+) as cofactor.

The protein localises to the cytoplasm. It carries out the reaction a 2'-deoxyribonucleoside 5'-diphosphate + ATP = a 2'-deoxyribonucleoside 5'-triphosphate + ADP. It catalyses the reaction a ribonucleoside 5'-diphosphate + ATP = a ribonucleoside 5'-triphosphate + ADP. Major role in the synthesis of nucleoside triphosphates other than ATP. The ATP gamma phosphate is transferred to the NDP beta phosphate via a ping-pong mechanism, using a phosphorylated active-site intermediate. The chain is Nucleoside diphosphate kinase from Cyanothece sp. (strain PCC 7425 / ATCC 29141).